We begin with the raw amino-acid sequence, 279 residues long: Aquaporin A (279 aa).

Residues 1–40 (MVKVVPLRFITYDPLKDPSKMIYRRPISKPVKAFKGFFSE) lie on the Cytoplasmic side of the membrane. Residues 41 to 61 (FLGTLYLVYFCGGSVCAAFAV) form a helical membrane-spanning segment. At 62-69 (AGDSAARA) the chain is on the extracellular side. A helical transmembrane segment spans residues 70-90 (LLGGLIQGMALAALIWAVSGV). The Cytoplasmic segment spans residues 91–114 (SGCNLNPAVTLANLLSGRVGLIDS). The NPA 1 motif lies at 96–98 (NPA). The chain crosses the membrane as a helical span at residues 115–135 (LYYVAAQILGCIAGAGILYGC). At 136–158 (LPNMYRIDLGVPHLAPGMNTGQA) the chain is on the extracellular side. A helical transmembrane segment spans residues 159 to 179 (FLMEMMLTSILCLCVLGTSVF). At 180 to 188 (NVWDRRLNR) the chain is on the cytoplasmic side. Residues 189–209 (IAPFAIGLALFIGVAIGFNFS) traverse the membrane as a helical segment. Topologically, residues 210–227 (GGALNPVRVLGPSIISGV) are extracellular. The NPA 2 motif lies at 214–216 (NPV). The chain crosses the membrane as a helical span at residues 228-248 (WSHHWVYWLGPIVGAILAAFI). The Cytoplasmic segment spans residues 249–279 (YRCLLQERFDVIERPGYIAPLIDPSTAVSSY).

Belongs to the MIP/aquaporin (TC 1.A.8) family.

The protein localises to the cell membrane. Functionally, may form a water-specific channel. Required for prolonged spore survival on fruiting bodies. The polypeptide is Aquaporin A (aqpA) (Dictyostelium discoideum (Social amoeba)).